The primary structure comprises 411 residues: Translation initiation factor 2 subunit gamma (411 aa).

The region spanning 9 to 203 is the tr-type G domain; it reads QAEVNIGMVG…AIEEFIPTPK (195 aa). A G1 region spans residues 18–25; the sequence is GHVDHGKT. The Mg(2+) site is built by Asp-21, Thr-25, Gly-46, and Thr-48. 21-26 is a binding site for GTP; the sequence is DHGKTT. The segment at 46–50 is G2; the sequence is GITIK. Residues Cys-61, Cys-64, Cys-73, and Cys-76 each contribute to the Zn(2+) site. The tract at residues 90 to 93 is G3; the sequence is DSPG. GTP is bound by residues 146–149 and 181–183; these read NKIE and SAL. Residues 146 to 149 are G4; it reads NKIE. The interval 181 to 183 is G5; the sequence is SAL.

Belongs to the TRAFAC class translation factor GTPase superfamily. Classic translation factor GTPase family. EIF2G subfamily. In terms of assembly, heterotrimer composed of an alpha, a beta and a gamma chain. Mg(2+) serves as cofactor.

It catalyses the reaction GTP + H2O = GDP + phosphate + H(+). EIF-2 functions in the early steps of protein synthesis by forming a ternary complex with GTP and initiator tRNA. The protein is Translation initiation factor 2 subunit gamma of Pyrococcus furiosus (strain ATCC 43587 / DSM 3638 / JCM 8422 / Vc1).